A 179-amino-acid chain; its full sequence is Large ribosomal subunit protein uL5 (179 aa).

Belongs to the universal ribosomal protein uL5 family. In terms of assembly, part of the 50S ribosomal subunit; part of the 5S rRNA/L5/L18/L25 subcomplex. Contacts the 5S rRNA and the P site tRNA. Forms a bridge to the 30S subunit in the 70S ribosome.

This is one of the proteins that bind and probably mediate the attachment of the 5S RNA into the large ribosomal subunit, where it forms part of the central protuberance. In the 70S ribosome it contacts protein S13 of the 30S subunit (bridge B1b), connecting the 2 subunits; this bridge is implicated in subunit movement. Contacts the P site tRNA; the 5S rRNA and some of its associated proteins might help stabilize positioning of ribosome-bound tRNAs. This chain is Large ribosomal subunit protein uL5, found in Anaplasma marginale (strain Florida).